A 142-amino-acid polypeptide reads, in one-letter code: Small heat shock protein IbpB (142 aa).

The region spanning 26 to 137 (SGESQSFPPY…APQRIAINER (112 aa)) is the sHSP domain.

This sequence belongs to the small heat shock protein (HSP20) family. Homodimer. Forms homomultimers of about 100-150 subunits at optimal growth temperatures. Conformation changes to oligomers at high temperatures or high ionic concentrations. The decrease in size of the multimers is accompanied by an increase in chaperone activity.

The protein resides in the cytoplasm. Associates with aggregated proteins, together with IbpA, to stabilize and protect them from irreversible denaturation and extensive proteolysis during heat shock and oxidative stress. Aggregated proteins bound to the IbpAB complex are more efficiently refolded and reactivated by the ATP-dependent chaperone systems ClpB and DnaK/DnaJ/GrpE. Its activity is ATP-independent. The polypeptide is Small heat shock protein IbpB (Salmonella newport (strain SL254)).